The following is a 141-amino-acid chain: Large ribosomal subunit protein uL11 (141 aa).

Belongs to the universal ribosomal protein uL11 family. Part of the ribosomal stalk of the 50S ribosomal subunit. Interacts with L10 and the large rRNA to form the base of the stalk. L10 forms an elongated spine to which L12 dimers bind in a sequential fashion forming a multimeric L10(L12)X complex. One or more lysine residues are methylated.

Forms part of the ribosomal stalk which helps the ribosome interact with GTP-bound translation factors. This chain is Large ribosomal subunit protein uL11, found in Ruminiclostridium cellulolyticum (strain ATCC 35319 / DSM 5812 / JCM 6584 / H10) (Clostridium cellulolyticum).